Consider the following 258-residue polypeptide: uncharacterized protein (258 aa).

7 helical membrane-spanning segments follow: residues 8 to 28 (VFLA…IVWF), 38 to 58 (VFFI…GGVH), 70 to 90 (EAMQ…GIFE), 121 to 141 (LEAI…AFAI), 176 to 196 (LGGI…LLVL), 204 to 224 (PLFL…AVLY), and 231 to 251 (HAAA…YWIV).

The protein resides in the cell membrane. This is an uncharacterized protein from Bacillus subtilis (strain 168).